The sequence spans 214 residues: rRNA N(6)-adenosine-methyltransferase metl-5 (214 aa).

Residues glutamine 25, threonine 28, glycine 55, cysteine 58, aspartate 78, and 106–107 (DI) contribute to the S-adenosyl-L-methionine site.

It belongs to the methyltransferase superfamily. PrmA family. As to quaternary structure, heterodimer; heterodimerizes with TRMT112/C04H5.1.

It catalyses the reaction adenosine in rRNA + S-adenosyl-L-methionine = N(6)-methyladenosine in rRNA + S-adenosyl-L-homocysteine + H(+). Its function is as follows. Catalytic subunit of a heterodimer with TRMT112/C04H5.1, which specifically methylates the 6th position of adenine in position 1717 of 18S rRNA. The sequence is that of rRNA N(6)-adenosine-methyltransferase metl-5 from Caenorhabditis elegans.